The following is a 391-amino-acid chain: Probable protein phosphatase 2C 32 (391 aa).

The interval methionine 1–arginine 53 is disordered. A compositionally biased stretch (low complexity) spans proline 8–proline 51. The helical transmembrane segment at leucine 95–valine 115 threads the bilayer. One can recognise a PPM-type phosphatase domain in the interval glutamate 129 to leucine 386. Mn(2+) contacts are provided by aspartate 168, glycine 169, aspartate 332, and aspartate 377.

The protein belongs to the PP2C family. Mg(2+) is required as a cofactor. It depends on Mn(2+) as a cofactor.

Its subcellular location is the membrane. It carries out the reaction O-phospho-L-seryl-[protein] + H2O = L-seryl-[protein] + phosphate. The enzyme catalyses O-phospho-L-threonyl-[protein] + H2O = L-threonyl-[protein] + phosphate. The polypeptide is Probable protein phosphatase 2C 32 (Oryza sativa subsp. japonica (Rice)).